We begin with the raw amino-acid sequence, 230 residues long: Protein FAM3A (230 aa).

The N-terminal stretch at 1 to 33 (MRLAGPLRIVALIIIMGLTWILVTILLGGPGVG) is a signal peptide. 2 cysteine pairs are disulfide-bonded: Cys59–Cys87 and Cys65–Cys222. One can recognise a GG-type lectin domain in the interval 68–226 (EHLSFRIVSG…LEMEGCIPRR (159 aa)).

The protein belongs to the FAM3 family.

The protein resides in the secreted. The chain is Protein FAM3A (Fam3a) from Mus musculus (Mouse).